The primary structure comprises 361 residues: Glyceraldehyde-3-phosphate dehydrogenase, glycosomal (361 aa).

NAD(+) contacts are provided by residues 13–14, D39, and R93; that span reads RI. D-glyceraldehyde 3-phosphate contacts are provided by residues 166–168, T198, 227–228, and R250; these read SCT and TG. Residue C167 is the Nucleophile of the active site. N336 contributes to the NAD(+) binding site. The Microbody targeting signal signature appears at 359-361; the sequence is SKL.

Belongs to the glyceraldehyde-3-phosphate dehydrogenase family. In terms of assembly, homotetramer.

The protein localises to the glycosome. The enzyme catalyses D-glyceraldehyde 3-phosphate + phosphate + NAD(+) = (2R)-3-phospho-glyceroyl phosphate + NADH + H(+). It functions in the pathway carbohydrate degradation; glycolysis; pyruvate from D-glyceraldehyde 3-phosphate: step 1/5. This is Glyceraldehyde-3-phosphate dehydrogenase, glycosomal (GAPDG) from Crithidia fasciculata.